We begin with the raw amino-acid sequence, 67 residues long: Large ribosomal subunit protein bL31 (67 aa).

The Zn(2+) site is built by C16, C18, C36, and C39.

This sequence belongs to the bacterial ribosomal protein bL31 family. Type A subfamily. In terms of assembly, part of the 50S ribosomal subunit. Zn(2+) serves as cofactor.

Binds the 23S rRNA. The protein is Large ribosomal subunit protein bL31 of Aliarcobacter butzleri (strain RM4018) (Arcobacter butzleri).